Here is an 829-residue protein sequence, read N- to C-terminus: ATP-dependent RNA helicase drs1 (829 aa).

Disordered stretches follow at residues 1-96 (MAPS…MDTE) and 145-295 (RRER…MSSF). A compositionally biased stretch (acidic residues) spans 20 to 32 (DNEEDIPLEEEQE). Basic residues predominate over residues 48-59 (KQKKKNNKKSKK). Over residues 63 to 78 (TEDDDDEAETKEDDAA) the composition is skewed to acidic residues. Over residues 150-163 (AAKEGKTTATKEEE) the composition is skewed to basic and acidic residues. Composition is skewed to acidic residues over residues 164 to 190 (DKME…DGVL), 218 to 228 (DGEDEDSEGED), 235 to 246 (DEDEGDASDDDS), and 258 to 271 (QSSD…EEEE). The segment covering 272–291 (AKMKEFFAPEEENQPKKKGE) has biased composition (basic and acidic residues). The Q motif signature appears at 293-321 (SSFQEMSLSRPILRGLTSVGFTKPTPIQA). The 175-residue stretch at 324–498 (IPISLMGKDV…RAGLNKPVRI (175 aa)) folds into the Helicase ATP-binding domain. An ATP-binding site is contributed by 337–344 (AVTGSGKT). The short motif at 446–449 (DEAD) is the DEAD box element. The Helicase C-terminal domain maps to 528–707 (YLLHICKTIY…EKQLQNMEMQ (180 aa)). Residues 728–829 (TWFETQEDKK…KGGKGKGRRK (102 aa)) are disordered. Positions 749-791 (GVRDKLKSKNEGKLSNKDRKKLDTMQERKQERTYKKGSAERAG) are enriched in basic and acidic residues. A compositionally biased stretch (basic residues) spans 800-815 (KVVKKVGRSAGPKKKG).

The protein belongs to the DEAD box helicase family. DDX27/DRS1 subfamily. As to quaternary structure, associates with pre-ribosomal particles.

The protein localises to the nucleus. It localises to the nucleolus. The catalysed reaction is ATP + H2O = ADP + phosphate + H(+). Its function is as follows. ATP-binding RNA helicase involved in ribosome assembly. This is ATP-dependent RNA helicase drs1 (drh-11) from Neurospora crassa (strain ATCC 24698 / 74-OR23-1A / CBS 708.71 / DSM 1257 / FGSC 987).